The following is a 292-amino-acid chain: Acetyl-coenzyme A carboxylase carboxyl transferase subunit beta (292 aa).

The region spanning 29 to 292 (LWSKCPECGQ…HGCESRVASS (264 aa)) is the CoA carboxyltransferase N-terminal domain. 4 residues coordinate Zn(2+): Cys-33, Cys-36, Cys-52, and Cys-55. The segment at 33–55 (CPECGQVVYRKDLLSNASVCGNC) adopts a C4-type zinc-finger fold.

This sequence belongs to the AccD/PCCB family. Acetyl-CoA carboxylase is a heterohexamer composed of biotin carboxyl carrier protein (AccB), biotin carboxylase (AccC) and two subunits each of ACCase subunit alpha (AccA) and ACCase subunit beta (AccD). Zn(2+) is required as a cofactor.

It localises to the cytoplasm. It carries out the reaction N(6)-carboxybiotinyl-L-lysyl-[protein] + acetyl-CoA = N(6)-biotinyl-L-lysyl-[protein] + malonyl-CoA. The protein operates within lipid metabolism; malonyl-CoA biosynthesis; malonyl-CoA from acetyl-CoA: step 1/1. Component of the acetyl coenzyme A carboxylase (ACC) complex. Biotin carboxylase (BC) catalyzes the carboxylation of biotin on its carrier protein (BCCP) and then the CO(2) group is transferred by the transcarboxylase to acetyl-CoA to form malonyl-CoA. In Synechococcus sp. (strain CC9311), this protein is Acetyl-coenzyme A carboxylase carboxyl transferase subunit beta.